Reading from the N-terminus, the 290-residue chain is 4-hydroxy-tetrahydrodipicolinate synthase (290 aa).

Position 44 (threonine 44) interacts with pyruvate. The active-site Proton donor/acceptor is tyrosine 132. The Schiff-base intermediate with substrate role is filled by lysine 160. Isoleucine 202 lines the pyruvate pocket.

Belongs to the DapA family. Homotetramer; dimer of dimers.

The protein resides in the cytoplasm. It carries out the reaction L-aspartate 4-semialdehyde + pyruvate = (2S,4S)-4-hydroxy-2,3,4,5-tetrahydrodipicolinate + H2O + H(+). It functions in the pathway amino-acid biosynthesis; L-lysine biosynthesis via DAP pathway; (S)-tetrahydrodipicolinate from L-aspartate: step 3/4. Its function is as follows. Catalyzes the condensation of (S)-aspartate-beta-semialdehyde [(S)-ASA] and pyruvate to 4-hydroxy-tetrahydrodipicolinate (HTPA). The sequence is that of 4-hydroxy-tetrahydrodipicolinate synthase from Geotalea daltonii (strain DSM 22248 / JCM 15807 / FRC-32) (Geobacter daltonii).